The primary structure comprises 360 residues: G-protein coupled receptor 15 (360 aa).

Topologically, residues 1-33 are extracellular; the sequence is MDPEETSVYLDYYYATSPNPDIRETHSHVPYTS. A helical transmembrane segment spans residues 34–54; sequence VFLPVFYTAVFLTGVLGNLVL. Residues 55 to 69 are Cytoplasmic-facing; the sequence is MGALHFKPGSRRLID. A helical membrane pass occupies residues 70-90; the sequence is IFIINLAASDFIFLVTLPLWV. Over 91–120 the chain is Extracellular; that stretch reads DKEASLGLWRTGSFLCKGSSYMISVNMHCS. Residues 121–141 form a helical membrane-spanning segment; that stretch reads VFLLTCMSVDRYLAIVCPVVS. Residues 142–149 are Cytoplasmic-facing; that stretch reads RKFRRTDC. The chain crosses the membrane as a helical span at residues 150–170; that stretch reads AYVVCASIWFISCLLGLPTLL. Topologically, residues 171–192 are extracellular; the sequence is SRELTLIDDKPYCAEKKATPLK. The chain crosses the membrane as a helical span at residues 193 to 213; sequence LIWSLVALIFTFFVPLLSIVT. Over 214–239 the chain is Cytoplasmic; sequence CYCCIARKLCAHYQQSGKHNKKLKKS. Residues 240-260 traverse the membrane as a helical segment; it reads IKIIFIVVAAFLVSWLPFNTF. Over 261 to 284 the chain is Extracellular; it reads KLLAIVSGLQQERYFPSAMLQLGM. Residues 285–305 traverse the membrane as a helical segment; that stretch reads EVSGPLAFANSCVNPFIYYIF. The Cytoplasmic portion of the chain corresponds to 306–360; sequence DSYIRRAIVHCLCPCLKNYDFGSSTETSDSHLTKALSTFIHAEDFTRRRKRSVSL. Serine 359 is modified (phosphoserine).

It belongs to the G-protein coupled receptor 1 family. In terms of assembly, interacts with adapter YWHAE; this interaction promotes ER-to-Golgi transport of GPR15. In terms of processing, phosphorylation is necessary for YWHAE binding and efficient surface expression. Post-translationally, O-glycosylated. Sialylated O-glycans in the N-terminal tail inhibits binding of GPR15LG. Sulfation is required for efficient binding of GPR15LG.

It is found in the cell membrane. Its function is as follows. G protein-coupled receptor that plays an important role in immune homeostasis. Acts via its natural ligand GPR15LG, a chemokine-like polypeptide strongly expressed in gastrointestinal tissues. GPR15-GPR15LG signaling axis regulates intestinal homeostasis and inflammation through the migration of immune cells. Controls thereby the specific homing of T-cells, particularly FOXP3+ regulatory T-cells (Tregs), to the large intestine lamina propria. Also required for skin localization of thymus-derived dendritic epidermal T-cells. Plays an important role in mediating cytoprotective function as well as angiogenesis of thrombomodulin. Mechanistically, preferentially signals through the Gi/o pathway to inhibit adenylate cyclase activity and activate a phosphatidylinositol-calcium second messenger system that regulates the release of Ca(2+) ions from intracellular stores. The sequence is that of G-protein coupled receptor 15 (GPR15) from Macaca mulatta (Rhesus macaque).